The chain runs to 536 residues: uncharacterized protein (536 aa).

A Radical SAM core domain is found at 163-394 (LDAYDSMSVQ…MNFIPTRPLE (232 aa)). 3 residues coordinate [4Fe-4S] cluster: C177, C181, and C184.

[4Fe-4S] cluster serves as cofactor.

This is an uncharacterized protein from Synechocystis sp. (strain ATCC 27184 / PCC 6803 / Kazusa).